Consider the following 331-residue polypeptide: Ferredoxin--NADP reductase 2 (331 aa).

7 residues coordinate FAD: glutamate 37, glutamine 45, tyrosine 50, valine 90, phenylalanine 124, aspartate 285, and threonine 326.

Belongs to the ferredoxin--NADP reductase type 2 family. As to quaternary structure, homodimer. The cofactor is FAD.

It carries out the reaction 2 reduced [2Fe-2S]-[ferredoxin] + NADP(+) + H(+) = 2 oxidized [2Fe-2S]-[ferredoxin] + NADPH. The sequence is that of Ferredoxin--NADP reductase 2 from Bacillus velezensis (strain DSM 23117 / BGSC 10A6 / LMG 26770 / FZB42) (Bacillus amyloliquefaciens subsp. plantarum).